A 49-amino-acid polypeptide reads, in one-letter code: Delta-actitoxin-Axm1b (49 aa).

Residues Gly-1–Asp-7 form a well-structured region region. 3 disulfide bridges follow: Cys-4-Cys-46, Cys-6-Cys-36, and Cys-29-Cys-47. The segment at Ser-8 to Thr-17 is arg-14 loop (non-well-structured region). The well-structured region stretch occupies residues Leu-18–Lys-49.

The protein belongs to the sea anemone sodium channel inhibitory toxin family. Type I subfamily.

It localises to the secreted. The protein resides in the nematocyst. In terms of biological role, binds specifically to voltage-gated sodium channels (Nav) (site 3), thereby delaying their inactivation. This toxin has the highest affinity of all anemone toxins for the mammalian sodium channel, whereas its paralog Anthopleurin-A retains the greatest capacity to discriminate between cardiac (Nav1.5/SCN5A) and neuronal sodium channels. When tested electrophysiologically, this toxin exhibits a high affinity for multiple sodium channels with a 50-fold preference for rat cardiac (Nav1.5/SCN5A) over neuronal channels (0.1 nM versus 5 nM). When tested by ion flux, the affinities are similar and appear to have higher affinity (9 nM versus 22 nM). The residue Lys-37 of this toxin has been shown to interact with channel Nav1.5 (residue Asp-1612 in rat and Asp-1610 in human), which is located in the DIV S3-S4 linker (corresponding to channel site 3). Selectively modifies sodium channel inactivation from the open state with little effect on channel activation or on inactivation from closed states. Does not display phospholipid-binding activities, suggesting that the domain IV S3-S4 linker is located at the extracellular surface and not buried in the phospholipid bilayer. The polypeptide is Delta-actitoxin-Axm1b (Anthopleura xanthogrammica (Giant green sea anemone)).